Reading from the N-terminus, the 103-residue chain is DNA-binding protein TRF1 (103 aa).

In terms of biological role, DNA-binding protein that recognizes the inverted terminal repeats of the pGKl linear DNA plasmids. This chain is DNA-binding protein TRF1 (TRF1), found in Kluyveromyces lactis (strain ATCC 8585 / CBS 2359 / DSM 70799 / NBRC 1267 / NRRL Y-1140 / WM37) (Yeast).